Here is a 108-residue protein sequence, read N- to C-terminus: Glutaredoxin-1 (108 aa).

In terms of domain architecture, Glutaredoxin spans 3-106; sequence EEFVQQRLAN…DILLSIGVLR (104 aa). A disulfide bridge connects residues C23 and C26.

This sequence belongs to the glutaredoxin family.

Its subcellular location is the virion. In terms of biological role, displays thioltransferase and dehydroascorbate reductase activities. The polypeptide is Glutaredoxin-1 (OPG075) (Cynomys gunnisoni (Gunnison's prairie dog)).